Consider the following 282-residue polypeptide: 4-hydroxybenzoate octaprenyltransferase (282 aa).

9 helical membrane-spanning segments follow: residues 17-37, 40-60, 90-110, 113-133, 135-155, 163-183, 207-227, 231-251, and 262-282; these read IGIL…NQGF, IDLL…GCVI, AFIL…KLPI, FYFA…KRFL, APQL…FIAS, FIVL…MYAM, LIIA…AINK, WFFY…LKLI, and AFLV…LALI.

It belongs to the UbiA prenyltransferase family. Mg(2+) is required as a cofactor.

The protein localises to the cell inner membrane. The catalysed reaction is all-trans-octaprenyl diphosphate + 4-hydroxybenzoate = 4-hydroxy-3-(all-trans-octaprenyl)benzoate + diphosphate. The protein operates within cofactor biosynthesis; ubiquinone biosynthesis. Its function is as follows. Catalyzes the prenylation of para-hydroxybenzoate (PHB) with an all-trans polyprenyl group. Mediates the second step in the final reaction sequence of ubiquinone-8 (UQ-8) biosynthesis, which is the condensation of the polyisoprenoid side chain with PHB, generating the first membrane-bound Q intermediate 3-octaprenyl-4-hydroxybenzoate. The protein is 4-hydroxybenzoate octaprenyltransferase of Legionella pneumophila (strain Corby).